The primary structure comprises 391 residues: Succinate--CoA ligase [GDP-forming] subunit beta, mitochondrial (391 aa).

The region spanning 5–233 (KKIMADHGVT…NAEFRQKEIF (229 aa)) is the ATP-grasp domain. GTP contacts are provided by residues Q16, 49-51 (GRG), and L105. Residues N202 and D216 each contribute to the Mg(2+) site. Substrate contacts are provided by residues N267 and 324 to 326 (GIV).

It belongs to the succinate/malate CoA ligase beta subunit family. GTP-specific subunit beta subfamily. Heterodimer of an alpha and a beta subunit. The beta subunit determines specificity for GTP. Mg(2+) serves as cofactor. Widely expressed. Not present in breast muscle.

The protein resides in the mitochondrion. It carries out the reaction GTP + succinate + CoA = succinyl-CoA + GDP + phosphate. It participates in carbohydrate metabolism; tricarboxylic acid cycle; succinate from succinyl-CoA (ligase route): step 1/1. Its function is as follows. GTP-specific succinyl-CoA synthetase functions in the citric acid cycle (TCA), coupling the hydrolysis of succinyl-CoA to the synthesis of GTP and thus represents the only step of substrate-level phosphorylation in the TCA. The beta subunit provides nucleotide specificity of the enzyme and binds the substrate succinate, while the binding sites for coenzyme A and phosphate are found in the alpha subunit. The protein is Succinate--CoA ligase [GDP-forming] subunit beta, mitochondrial of Columba livia (Rock dove).